Reading from the N-terminus, the 479-residue chain is ATP-dependent RNA helicase DbpA (479 aa).

Positions 2–30 (SHFKNYQISHDILRALEGLGYTEPTKVQQ) match the Q motif motif. Residues 33–203 (IPAALERKDL…RQYMQNPEHI (171 aa)) enclose the Helicase ATP-binding domain. Position 46-53 (46-53 (SQTGSGKT)) interacts with ATP. Positions 151-154 (DEAD) match the DEAD box motif. Residues 214 to 374 (NIEHAVIQVR…KIEAPSQEEV (161 aa)) form the Helicase C-terminal domain. The interval 404 to 479 (MKLYFNGGKK…KQLKVNKANK (76 aa)) is involved in 23S rRNA binding.

Belongs to the DEAD box helicase family. DbpA subfamily. May interact with RNA helicases CshA and CshB.

Its subcellular location is the cytoplasm. It catalyses the reaction ATP + H2O = ADP + phosphate + H(+). With respect to regulation, ATPase activity is stimulated by interaction with RNA. Its function is as follows. DEAD-box RNA helicase involved in the assembly of the 50S ribosomal subunit. Has an RNA-dependent ATPase activity, which is specific for 23S rRNA, and a 3' to 5' RNA helicase activity that uses the energy of ATP hydrolysis to destabilize and unwind short rRNA duplexes. The chain is ATP-dependent RNA helicase DbpA from Bacillus subtilis (strain 168).